Reading from the N-terminus, the 574-residue chain is Proline--tRNA ligase (574 aa).

This sequence belongs to the class-II aminoacyl-tRNA synthetase family. ProS type 1 subfamily. Homodimer.

It is found in the cytoplasm. The catalysed reaction is tRNA(Pro) + L-proline + ATP = L-prolyl-tRNA(Pro) + AMP + diphosphate. Its function is as follows. Catalyzes the attachment of proline to tRNA(Pro) in a two-step reaction: proline is first activated by ATP to form Pro-AMP and then transferred to the acceptor end of tRNA(Pro). As ProRS can inadvertently accommodate and process non-cognate amino acids such as alanine and cysteine, to avoid such errors it has two additional distinct editing activities against alanine. One activity is designated as 'pretransfer' editing and involves the tRNA(Pro)-independent hydrolysis of activated Ala-AMP. The other activity is designated 'posttransfer' editing and involves deacylation of mischarged Ala-tRNA(Pro). The misacylated Cys-tRNA(Pro) is not edited by ProRS. This is Proline--tRNA ligase from Ralstonia nicotianae (strain ATCC BAA-1114 / GMI1000) (Ralstonia solanacearum).